The chain runs to 299 residues: Probable lipid kinase YegS (299 aa).

Residues 2 to 133 (ANFPASLLIL…IDMARVNDKT (132 aa)) form the DAGKc domain. Residues Thr40, 66-72 (GDGTINE), and Thr95 each bind ATP. Mg(2+) is bound by residues Leu215, Asp218, and Leu220. Residue Glu271 is the Proton acceptor of the active site.

It belongs to the diacylglycerol/lipid kinase family. YegS lipid kinase subfamily. Mg(2+) serves as cofactor. Ca(2+) is required as a cofactor.

It localises to the cytoplasm. In terms of biological role, probably phosphorylates lipids; the in vivo substrate is unknown. The chain is Probable lipid kinase YegS from Salmonella heidelberg (strain SL476).